A 1979-amino-acid chain; its full sequence is E3 ubiquitin-protein ligase TTC3 (1979 aa).

Positions 1 to 230 (MDDFAEGGLS…RHSCMQCVKQ (230 aa)) are interaction with POLG. TPR repeat units follow at residues 231–264 (GELM…RPEN) and 266–298 (LLYG…KNTW). Ser378 is modified (phosphoserine). A disordered region spans residues 422 to 457 (CDCHPEFLPPPSQPPRHKGKQKSRNNESEKPSFNSE). TPR repeat units follow at residues 536–572 (VLVV…YPNE) and 576–609 (CLAY…ISRL). Residues 783–811 (LAQERMEEDLRESNPPKNEEPEETSDSAQ) are disordered. The residue at position 1009 (Ser1009) is a Phosphoserine. 7 disordered regions span residues 1021–1067 (NKGK…GPFA), 1214–1289 (QPDV…EEAK), 1402–1427 (QGSA…SSDS), 1574–1601 (KNDG…DEKT), 1757–1776 (MDSA…GSPT), 1788–1821 (KGAS…KKPS), and 1873–1927 (DEQK…PAPD). The segment covering 1036-1050 (VGSGAASVAPSSEAV) has biased composition (low complexity). Ser1060 is subject to Phosphoserine. The segment covering 1214 to 1227 (QPDVKSEALSEDVK) has biased composition (basic and acidic residues). Residues 1248–1257 (DSDSSSGSAS) are compositionally biased toward low complexity. Basic and acidic residues predominate over residues 1576–1586 (DGFDKECEPHP). 2 stretches are compositionally biased toward polar residues: residues 1788–1799 (KGASQVSPSEQS) and 1808–1821 (GQAT…KKPS). Ser1794 is subject to Phosphoserine. Over residues 1873–1890 (DEQKKKKPNPGKDKKTSE) the composition is skewed to basic and acidic residues. The RING-type; atypical zinc finger occupies 1931–1971 (CEICHEIFKSKNMRVLKCGHKFHKGCFKQWLKGQSTCPTCG).

Interacts (when phosphorylated on Ser-378) with AKT1, AKT2 and AKT3 (when phosphorylated). Interacts with CIT. Interacts with POLG. Interacts with HSP70. Interacts with SMURF2. Phosphorylation on Ser-378 by Akt is required for ubiquitin ligase activity. Post-translationally, proteolytically cleaved into differently sized N- and C-terminal fragments.

It is found in the nucleus. It localises to the cytoplasm. Its subcellular location is the golgi apparatus. The enzyme catalyses S-ubiquitinyl-[E2 ubiquitin-conjugating enzyme]-L-cysteine + [acceptor protein]-L-lysine = [E2 ubiquitin-conjugating enzyme]-L-cysteine + N(6)-ubiquitinyl-[acceptor protein]-L-lysine.. Its pathway is protein modification; protein ubiquitination. E3 ubiquitin-protein ligase which catalyzes the formation of 'Lys-48'-polyubiquitin chains. Mediates the ubiquitination and subsequent degradation of phosphorylated Akt (AKT1, AKT2 and AKT3) in the nucleus. Acts as a terminal regulator of Akt signaling after activation; its phosphorylation by Akt, which is a prerequisite for ubiquitin ligase activity, suggests the existence of a regulation mechanism required to control Akt levels after activation. Positively regulates TGFB1-induced epithelial-mesenchymal transition and myofibroblast differentiation by mediating the ubiquitination and subsequent degradation of SMURF2. Regulates neuronal differentiation by regulating actin remodeling and Golgi organization via a signaling cascade involving RHOA, CIT and ROCK. Inhibits cell proliferation. The sequence is that of E3 ubiquitin-protein ligase TTC3 (Ttc3) from Mus musculus (Mouse).